We begin with the raw amino-acid sequence, 397 residues long: Pectate lyase 4 (397 aa).

Residues Met1 to Leu25 form the signal peptide. The N-linked (GlcNAc...) asparagine glycan is linked to Asn36. Residues Cys54 and Cys71 are joined by a disulfide bond. 3 PbH1 repeats span residues Val159–Gly202, Ser203–Asn224, and Ser227–Ala248. Residues Asp194, Asp218, and Asp222 each coordinate Ca(2+). Arg274 is an active-site residue.

Belongs to the polysaccharide lyase 1 family. Amb a subfamily. In terms of assembly, monomer. Ca(2+) serves as cofactor. Post-translationally, the N-terminus is blocked. Pollen and flowers.

It catalyses the reaction Eliminative cleavage of (1-&gt;4)-alpha-D-galacturonan to give oligosaccharides with 4-deoxy-alpha-D-galact-4-enuronosyl groups at their non-reducing ends.. Its pathway is glycan metabolism; pectin degradation; 2-dehydro-3-deoxy-D-gluconate from pectin: step 2/5. In terms of biological role, has pectate lyase activity. This Ambrosia artemisiifolia (Common ragweed) protein is Pectate lyase 4.